Reading from the N-terminus, the 248-residue chain is Ubiquinone/menaquinone biosynthesis C-methyltransferase UbiE (248 aa).

S-adenosyl-L-methionine-binding residues include Ser-68 and Asp-92.

It belongs to the class I-like SAM-binding methyltransferase superfamily. MenG/UbiE family.

It catalyses the reaction a 2-demethylmenaquinol + S-adenosyl-L-methionine = a menaquinol + S-adenosyl-L-homocysteine + H(+). The enzyme catalyses a 2-methoxy-6-(all-trans-polyprenyl)benzene-1,4-diol + S-adenosyl-L-methionine = a 5-methoxy-2-methyl-3-(all-trans-polyprenyl)benzene-1,4-diol + S-adenosyl-L-homocysteine + H(+). Its pathway is quinol/quinone metabolism; menaquinone biosynthesis; menaquinol from 1,4-dihydroxy-2-naphthoate: step 2/2. The protein operates within cofactor biosynthesis; ubiquinone biosynthesis. Functionally, methyltransferase required for the conversion of demethylmenaquinol (DMKH2) to menaquinol (MKH2) and the conversion of 2-polyprenyl-6-methoxy-1,4-benzoquinol (DDMQH2) to 2-polyprenyl-3-methyl-6-methoxy-1,4-benzoquinol (DMQH2). This chain is Ubiquinone/menaquinone biosynthesis C-methyltransferase UbiE, found in Rickettsia rickettsii (strain Iowa).